The primary structure comprises 485 residues: Forkhead box protein N3 (485 aa).

2 disordered regions span residues 1–54 (MGPV…KGGM) and 85–108 (PVQD…DAKQ). The span at 16–30 (ISVSSQCYRSSTLSN) shows a compositional bias: polar residues. A DNA-binding region (fork-head) is located at residues 113-209 (KPPYSFSCLI…QALKKTPYHP (97 aa)). Disordered regions lie at residues 316–357 (MESE…ISSS) and 401–449 (PLVE…MKEA). Residues 338-357 (SSAKSANKRSSSPSDSISSS) are compositionally biased toward low complexity. A compositionally biased stretch (basic residues) spans 410–422 (QHKKKQHLLKLRR).

As to expression, at early cleavage stages, localized within the animal half of the embryo. At gastrulation, expression expands over the whole embryo excluding the future endodermal cells of the blastopore. During neurulation, expressed in the prospective eye field and in the neural crest cells. Strongly enriched in the eye vesicles at stage 26. From stage 29 onwards, expressed predominantly in the eye, the branchial arches and the vagal ganglion. At stage 38, expressed throughout the head with strongest expression in the head mesenchyme and the eye lens.

The protein localises to the nucleus. Acts as a transcriptional repressor. May be involved in DNA damage-inducible cell cycle arrests (checkpoints). In Xenopus laevis (African clawed frog), this protein is Forkhead box protein N3.